Consider the following 379-residue polypeptide: Cytochrome b (379 aa).

A run of 4 helical transmembrane segments spans residues 33-53 (FGSL…FLAM), 77-98 (WLIR…FIHV), 113-133 (WNIG…GYVL), and 178-198 (FFAF…VHLL). Heme b contacts are provided by H83 and H97. Residues H182 and H196 each coordinate heme b. Residue H201 coordinates a ubiquinone. 4 helical membrane-spanning segments follow: residues 226–246 (IKDL…ALFF), 288–308 (LGGV…PLLN), 320–340 (ITQT…WIGG), and 347–367 (FTTI…IIMP).

It belongs to the cytochrome b family. In terms of assembly, the cytochrome bc1 complex contains 11 subunits: 3 respiratory subunits (MT-CYB, CYC1 and UQCRFS1), 2 core proteins (UQCRC1 and UQCRC2) and 6 low-molecular weight proteins (UQCRH/QCR6, UQCRB/QCR7, UQCRQ/QCR8, UQCR10/QCR9, UQCR11/QCR10 and a cleavage product of UQCRFS1). This cytochrome bc1 complex then forms a dimer. It depends on heme b as a cofactor.

Its subcellular location is the mitochondrion inner membrane. Functionally, component of the ubiquinol-cytochrome c reductase complex (complex III or cytochrome b-c1 complex) that is part of the mitochondrial respiratory chain. The b-c1 complex mediates electron transfer from ubiquinol to cytochrome c. Contributes to the generation of a proton gradient across the mitochondrial membrane that is then used for ATP synthesis. The sequence is that of Cytochrome b (MT-CYB) from Deltamys kempi (Kemp's grass mouse).